The sequence spans 299 residues: Ribosomal RNA small subunit methyltransferase H (299 aa).

Residues 24–26 (GGH), D43, F68, D90, and Q97 contribute to the S-adenosyl-L-methionine site.

It belongs to the methyltransferase superfamily. RsmH family.

The protein localises to the cytoplasm. The catalysed reaction is cytidine(1402) in 16S rRNA + S-adenosyl-L-methionine = N(4)-methylcytidine(1402) in 16S rRNA + S-adenosyl-L-homocysteine + H(+). In terms of biological role, specifically methylates the N4 position of cytidine in position 1402 (C1402) of 16S rRNA. In Francisella tularensis subsp. tularensis (strain WY96-3418), this protein is Ribosomal RNA small subunit methyltransferase H.